Reading from the N-terminus, the 340-residue chain is N-acetyl-gamma-glutamyl-phosphate reductase (340 aa).

Cys-147 is an active-site residue.

It belongs to the NAGSA dehydrogenase family. Type 1 subfamily.

It localises to the cytoplasm. The catalysed reaction is N-acetyl-L-glutamate 5-semialdehyde + phosphate + NADP(+) = N-acetyl-L-glutamyl 5-phosphate + NADPH + H(+). The protein operates within amino-acid biosynthesis; L-arginine biosynthesis; N(2)-acetyl-L-ornithine from L-glutamate: step 3/4. Functionally, catalyzes the NADPH-dependent reduction of N-acetyl-5-glutamyl phosphate to yield N-acetyl-L-glutamate 5-semialdehyde. The chain is N-acetyl-gamma-glutamyl-phosphate reductase from Lactococcus lactis subsp. lactis (strain IL1403) (Streptococcus lactis).